The primary structure comprises 152 residues: Ribonuclease pancreatic (152 aa).

The first 24 residues, 1–24 (MALDKSVILLPLLVLVLLVLGCLG), serve as a signal peptide directing secretion. Lys-31 and Arg-34 together coordinate substrate. Residue His-36 is the Proton acceptor of the active site. The N-linked (GlcNAc...) asparagine glycan is linked to Asn-46. Cystine bridges form between Cys-50–Cys-108, Cys-64–Cys-119, Cys-82–Cys-134, and Cys-89–Cys-96. Residues 65-69 (KPVNT), Lys-90, and Arg-109 contribute to the substrate site. The N-linked (GlcNAc...) asparagine glycan is linked to Asn-112. The active-site Proton donor is His-143.

It belongs to the pancreatic ribonuclease family. In terms of assembly, monomer. Interacts with and forms tight 1:1 complexes with RNH1. Dimerization of two such complexes may occur. Interaction with RNH1 inhibits this protein.

Its subcellular location is the secreted. It catalyses the reaction an [RNA] containing cytidine + H2O = an [RNA]-3'-cytidine-3'-phosphate + a 5'-hydroxy-ribonucleotide-3'-[RNA].. It carries out the reaction an [RNA] containing uridine + H2O = an [RNA]-3'-uridine-3'-phosphate + a 5'-hydroxy-ribonucleotide-3'-[RNA].. Its function is as follows. Endonuclease that catalyzes the cleavage of RNA on the 3' side of pyrimidine nucleotides. Acts on single-stranded and double-stranded RNA. The chain is Ribonuclease pancreatic (RNASE1) from Miopithecus talapoin (Angolan talapoin).